Consider the following 279-residue polypeptide: Toxin TxP-I (279 aa).

A signal peptide spans 1 to 14 (MNLFFLFIIPTILA). Residues 15–27 (VKPFRSFNNISLI) constitute a propeptide that is removed on maturation.

Post-translationally, contains several disulfide bonds. In terms of tissue distribution, posterior glands which appear to be connected with the stylet through a series of ducts.

The protein localises to the secreted. Functionally, part of a complex mixture of neurotoxins which P.tritici utilizes to capture prey. It has contracting-paralyzing activity in insects. This Pyemotes tritici (Straw itch mite) protein is Toxin TxP-I.